The primary structure comprises 288 residues: Homoserine kinase (288 aa).

Position 79-89 (79-89 (PLARGLGSSSS)) interacts with ATP.

It belongs to the GHMP kinase family. Homoserine kinase subfamily.

It localises to the cytoplasm. It carries out the reaction L-homoserine + ATP = O-phospho-L-homoserine + ADP + H(+). The protein operates within amino-acid biosynthesis; L-threonine biosynthesis; L-threonine from L-aspartate: step 4/5. Its function is as follows. Catalyzes the ATP-dependent phosphorylation of L-homoserine to L-homoserine phosphate. This is Homoserine kinase from Streptococcus sanguinis (strain SK36).